The following is a 383-amino-acid chain: 8-amino-7-oxononanoate synthase (383 aa).

Arg27 and Arg34 together coordinate substrate. 114–115 (GY) provides a ligand contact to pyridoxal 5'-phosphate. His139 provides a ligand contact to substrate. Pyridoxal 5'-phosphate-binding positions include Ser187, 212–215 (DDAH), and 232–235 (TLSK). Lys235 is modified (N6-(pyridoxal phosphate)lysine). Thr344 contacts substrate.

The protein belongs to the class-II pyridoxal-phosphate-dependent aminotransferase family. BioF subfamily. In terms of assembly, homodimer. Requires pyridoxal 5'-phosphate as cofactor.

The catalysed reaction is 6-carboxyhexanoyl-[ACP] + L-alanine + H(+) = (8S)-8-amino-7-oxononanoate + holo-[ACP] + CO2. It participates in cofactor biosynthesis; biotin biosynthesis. In terms of biological role, catalyzes the decarboxylative condensation of pimeloyl-[acyl-carrier protein] and L-alanine to produce 8-amino-7-oxononanoate (AON), [acyl-carrier protein], and carbon dioxide. This is 8-amino-7-oxononanoate synthase from Methylorubrum extorquens (strain PA1) (Methylobacterium extorquens).